The chain runs to 180 residues: Cytokinin-beta-glucosidase 1 (180 aa).

In terms of biological role, hydrolyzes cytokinin glucosides thus liberating free cytokinins. This is Cytokinin-beta-glucosidase 1 (ROLC1) from Panax ginseng (Korean ginseng).